Reading from the N-terminus, the 107-residue chain is Flagellar transcriptional regulator FlhD (107 aa).

The protein belongs to the FlhD family. In terms of assembly, homodimer; disulfide-linked. Forms a heterohexamer composed of two FlhC and four FlhD subunits. Each FlhC binds a FlhD dimer, forming a heterotrimer, and a hexamer assembles by dimerization of two heterotrimers.

It localises to the cytoplasm. Functionally, functions in complex with FlhC as a master transcriptional regulator that regulates transcription of several flagellar and non-flagellar operons by binding to their promoter region. Activates expression of class 2 flagellar genes, including fliA, which is a flagellum-specific sigma factor that turns on the class 3 genes. Also regulates genes whose products function in a variety of physiological pathways. This is Flagellar transcriptional regulator FlhD from Bordetella pertussis (strain Tohama I / ATCC BAA-589 / NCTC 13251).